Consider the following 154-residue polypeptide: Acidic phospholipase A2 2 (154 aa).

Residues 1-19 (MHPAHLLVPLGVCVSLLGA) form the signal peptide. A propeptide spanning residues 20-27 (ARIPPLPL) is cleaved from the precursor. Disulfide bonds link cysteine 38–cysteine 104, cysteine 54–cysteine 153, cysteine 56–cysteine 72, cysteine 71–cysteine 132, cysteine 78–cysteine 125, cysteine 88–cysteine 118, and cysteine 111–cysteine 123. Residues tyrosine 55, glycine 57, and glycine 59 each contribute to the Ca(2+) site. The active site involves histidine 75. A Ca(2+)-binding site is contributed by aspartate 76. Aspartate 126 is a catalytic residue.

This sequence belongs to the phospholipase A2 family. Group I subfamily. D49 sub-subfamily. Monomer. It depends on Ca(2+) as a cofactor. Expressed by the venom gland.

The protein localises to the secreted. The enzyme catalyses a 1,2-diacyl-sn-glycero-3-phosphocholine + H2O = a 1-acyl-sn-glycero-3-phosphocholine + a fatty acid + H(+). Functionally, snake venom phospholipase A2 (PLA2) that shows moderate enzymatic activity and exhibits procoagulant activity. PLA2 catalyzes the calcium-dependent hydrolysis of the 2-acyl groups in 3-sn-phosphoglycerides. This Pseudonaja textilis (Eastern brown snake) protein is Acidic phospholipase A2 2.